The chain runs to 252 residues: Trans-aconitate 2-methyltransferase (252 aa).

Belongs to the methyltransferase superfamily. Tam family.

It localises to the cytoplasm. The enzyme catalyses trans-aconitate + S-adenosyl-L-methionine = (E)-3-(methoxycarbonyl)pent-2-enedioate + S-adenosyl-L-homocysteine. Its function is as follows. Catalyzes the S-adenosylmethionine monomethyl esterification of trans-aconitate. This chain is Trans-aconitate 2-methyltransferase, found in Escherichia coli (strain 55989 / EAEC).